The chain runs to 215 residues: 3-demethoxyubiquinol 3-hydroxylase (215 aa).

The Fe cation site is built by E64, E94, H97, E146, E178, and H181.

The protein belongs to the COQ7 family. Requires Fe cation as cofactor.

The protein localises to the cell membrane. The enzyme catalyses a 5-methoxy-2-methyl-3-(all-trans-polyprenyl)benzene-1,4-diol + AH2 + O2 = a 3-demethylubiquinol + A + H2O. It participates in cofactor biosynthesis; ubiquinone biosynthesis. Its function is as follows. Catalyzes the hydroxylation of 2-nonaprenyl-3-methyl-6-methoxy-1,4-benzoquinol during ubiquinone biosynthesis. The chain is 3-demethoxyubiquinol 3-hydroxylase from Pseudomonas fluorescens (strain SBW25).